A 359-amino-acid chain; its full sequence is Chondroadherin (359 aa).

The N-terminal stretch at 1–22 (MVRPMLLLSLGLLAGLLPALAA) is a signal peptide. A disulfide bond links Cys-23 and Cys-38. The LRRNT domain occupies 23-52 (CPQNCHCHSDLQHVICDKVGLQKIPKVSEK). 9 LRR repeats span residues 76-97 (NLVS…AFRG), 100-121 (QLIY…AFDD), 124-145 (ELTY…LLSP), 148-169 (NLFI…AFQG), 172-193 (DLRW…ALDD), 196-217 (NLAK…ALSK), 220-241 (VVEE…AFQS), 245-266 (YLET…AFLG), and 269-290 (TLKH…FPFD). Ser-144 carries an O-linked (GalNAc...) serine glycan. Positions 300–348 (NPWKCTCQLRGLRRWLEAKASRPDATCASPAKFKGQHIRDTDAFRSCKF) constitute an LRRCT domain. Disulfide bonds link Cys-304-Cys-346 and Cys-306-Cys-326.

This sequence belongs to the small leucine-rich proteoglycan (SLRP) family. SLRP class IV subfamily. Mostly monomeric. Interacts with collagen type II. Present in chondrocytes at all ages.

It is found in the secreted. The protein resides in the extracellular space. The protein localises to the extracellular matrix. In terms of biological role, promotes attachment of chondrocytes, fibroblasts, and osteoblasts. This binding is mediated (at least for chondrocytes and fibroblasts) by the integrin alpha(2)beta(1). May play an important role in the regulation of chondrocyte growth and proliferation. The sequence is that of Chondroadherin (CHAD) from Homo sapiens (Human).